Here is a 328-residue protein sequence, read N- to C-terminus: MVREKVKVSTRTLQWKCVESRADSKRLYYGRFILSPLMKGQADTIGIAMRRVLLGEIEGTCITRAKSEKIPHEYSTIVGIQESVHEILMNLKDIVLRSNLYGTCDALICVKGPGYVTAQDILLPPSVEIVDNTQHIASLTEPIDLSIGLQIERSRGYNIKTPNTFQDGNCYPIDAVFMPVRNANHSIQSYGNGNEKQEILFLEIWTNGSLTPKEALHEASRSLIDLFIPFLQAEDENLPLENNQYKVTLPFFTFHDRLAKLTKKKKEIALKSIFIDQSEMSPRIYNCLKKSNIHTLFDLLNTRQEDLMKIEHFRIEDVKQIMSILEKK.

The interval 1–234 is alpha N-terminal domain (alpha-NTD); sequence MVREKVKVST…DLFIPFLQAE (234 aa). The interval 268–328 is alpha C-terminal domain (alpha-CTD); sequence IALKSIFIDQ…KQIMSILEKK (61 aa).

Belongs to the RNA polymerase alpha chain family. In terms of assembly, in plastids the minimal PEP RNA polymerase catalytic core is composed of four subunits: alpha, beta, beta', and beta''. When a (nuclear-encoded) sigma factor is associated with the core the holoenzyme is formed, which can initiate transcription.

The protein localises to the plastid. Its subcellular location is the chloroplast. The enzyme catalyses RNA(n) + a ribonucleoside 5'-triphosphate = RNA(n+1) + diphosphate. In terms of biological role, DNA-dependent RNA polymerase catalyzes the transcription of DNA into RNA using the four ribonucleoside triphosphates as substrates. The protein is DNA-directed RNA polymerase subunit alpha of Citrus sinensis (Sweet orange).